The chain runs to 175 residues: Transcription factor E (175 aa).

Residues 4 to 88 (AEDLFINLAK…YWKPNIDQIN (85 aa)) form the HTH TFE/IIEalpha-type domain.

Belongs to the TFE family. Monomer. Interaction with RNA polymerase subunits RpoF and RpoE is necessary for Tfe stimulatory transcription activity. Able to interact with Tbp and RNA polymerase in the absence of DNA promoter. Interacts both with the preinitiation and elongation complexes.

In terms of biological role, transcription factor that plays a role in the activation of archaeal genes transcribed by RNA polymerase. Facilitates transcription initiation by enhancing TATA-box recognition by TATA-box-binding protein (Tbp), and transcription factor B (Tfb) and RNA polymerase recruitment. Not absolutely required for transcription in vitro, but particularly important in cases where Tbp or Tfb function is not optimal. It dynamically alters the nucleic acid-binding properties of RNA polymerases by stabilizing the initiation complex and destabilizing elongation complexes. Seems to translocate with the RNA polymerase following initiation and acts by binding to the non template strand of the transcription bubble in elongation complexes. The protein is Transcription factor E of Saccharolobus islandicus (strain Y.N.15.51 / Yellowstone #2) (Sulfolobus islandicus).